A 388-amino-acid polypeptide reads, in one-letter code: Phosphopentomutase (388 aa).

Residues aspartate 10, aspartate 282, histidine 287, aspartate 323, histidine 324, and histidine 335 each contribute to the Mn(2+) site.

This sequence belongs to the phosphopentomutase family. Requires Mn(2+) as cofactor.

The protein resides in the cytoplasm. The enzyme catalyses 2-deoxy-alpha-D-ribose 1-phosphate = 2-deoxy-D-ribose 5-phosphate. It carries out the reaction alpha-D-ribose 1-phosphate = D-ribose 5-phosphate. It participates in carbohydrate degradation; 2-deoxy-D-ribose 1-phosphate degradation; D-glyceraldehyde 3-phosphate and acetaldehyde from 2-deoxy-alpha-D-ribose 1-phosphate: step 1/2. Functionally, isomerase that catalyzes the conversion of deoxy-ribose 1-phosphate (dRib-1-P) and ribose 1-phosphate (Rib-1-P) to deoxy-ribose 5-phosphate (dRib-5-P) and ribose 5-phosphate (Rib-5-P), respectively. The chain is Phosphopentomutase from Carboxydothermus hydrogenoformans (strain ATCC BAA-161 / DSM 6008 / Z-2901).